The following is a 389-amino-acid chain: Galactokinase (389 aa).

34 to 37 is a substrate binding site; the sequence is EHTD. ATP-binding positions include Ser68 and 125–131; that span reads GSGLSSS. The Mg(2+) site is built by Ser131 and Glu163. Residue Asp175 is the Proton acceptor of the active site. Tyr225 serves as a coordination point for substrate.

The protein belongs to the GHMP kinase family. GalK subfamily.

Its subcellular location is the cytoplasm. The catalysed reaction is alpha-D-galactose + ATP = alpha-D-galactose 1-phosphate + ADP + H(+). The protein operates within carbohydrate metabolism; galactose metabolism. In terms of biological role, catalyzes the transfer of the gamma-phosphate of ATP to D-galactose to form alpha-D-galactose-1-phosphate (Gal-1-P). The chain is Galactokinase from Clostridium acetobutylicum (strain ATCC 824 / DSM 792 / JCM 1419 / IAM 19013 / LMG 5710 / NBRC 13948 / NRRL B-527 / VKM B-1787 / 2291 / W).